A 252-amino-acid chain; its full sequence is ATP synthase subunit a (252 aa).

Helical transmembrane passes span 29 to 49 (FTNV…FLFI), 87 to 107 (FFPL…IGLF), 116 to 136 (QIMI…GYGF), 146 to 166 (LFVP…IEVI), 183 to 205 (MLAG…ELGI), and 219 to 239 (VAIT…FTVL).

Belongs to the ATPase A chain family. As to quaternary structure, F-type ATPases have 2 components, CF(1) - the catalytic core - and CF(0) - the membrane proton channel. CF(1) has five subunits: alpha(3), beta(3), gamma(1), delta(1), epsilon(1). CF(0) has three main subunits: a(1), b(2) and c(9-12). The alpha and beta chains form an alternating ring which encloses part of the gamma chain. CF(1) is attached to CF(0) by a central stalk formed by the gamma and epsilon chains, while a peripheral stalk is formed by the delta and b chains.

The protein resides in the cell inner membrane. Functionally, key component of the proton channel; it plays a direct role in the translocation of protons across the membrane. The protein is ATP synthase subunit a of Bartonella quintana (strain Toulouse) (Rochalimaea quintana).